The sequence spans 369 residues: NAD(P)H-quinone oxidoreductase subunit 1, chloroplastic (369 aa).

Helical transmembrane passes span 25-45, 104-124, 130-150, 270-290, and 306-326; these read FGFIWIITPILTYTLGVTIGI, VMVVVPVFLSYLVIPLGHGII, IGVFFWIAVSSVAPLGLLTAG, LSATILYLGGWNSPIPFLFLP, and VISITIAIIITLAKAYSFLFI.

Belongs to the complex I subunit 1 family. As to quaternary structure, NDH is composed of at least 16 different subunits, 5 of which are encoded in the nucleus.

The protein resides in the plastid. The protein localises to the chloroplast thylakoid membrane. The catalysed reaction is a plastoquinone + NADH + (n+1) H(+)(in) = a plastoquinol + NAD(+) + n H(+)(out). The enzyme catalyses a plastoquinone + NADPH + (n+1) H(+)(in) = a plastoquinol + NADP(+) + n H(+)(out). In terms of biological role, NDH shuttles electrons from NAD(P)H:plastoquinone, via FMN and iron-sulfur (Fe-S) centers, to quinones in the photosynthetic chain and possibly in a chloroplast respiratory chain. The immediate electron acceptor for the enzyme in this species is believed to be plastoquinone. Couples the redox reaction to proton translocation, and thus conserves the redox energy in a proton gradient. The protein is NAD(P)H-quinone oxidoreductase subunit 1, chloroplastic of Huperzia lucidula (Shining clubmoss).